A 315-amino-acid polypeptide reads, in one-letter code: tRNA dimethylallyltransferase (315 aa).

An ATP-binding site is contributed by 15–22; sequence GPTACGKS. Residue 17–22 participates in substrate binding; it reads TACGKS. Interaction with substrate tRNA regions lie at residues 40 to 43 and 162 to 166; these read DSAL and QRLIR.

Belongs to the IPP transferase family. In terms of assembly, monomer. Mg(2+) serves as cofactor.

The catalysed reaction is adenosine(37) in tRNA + dimethylallyl diphosphate = N(6)-dimethylallyladenosine(37) in tRNA + diphosphate. Its function is as follows. Catalyzes the transfer of a dimethylallyl group onto the adenine at position 37 in tRNAs that read codons beginning with uridine, leading to the formation of N6-(dimethylallyl)adenosine (i(6)A). This Buchnera aphidicola subsp. Acyrthosiphon pisum (strain APS) (Acyrthosiphon pisum symbiotic bacterium) protein is tRNA dimethylallyltransferase.